The following is a 241-amino-acid chain: Probable transcriptional regulatory protein CV_3123 (241 aa).

This sequence belongs to the TACO1 family.

It localises to the cytoplasm. The chain is Probable transcriptional regulatory protein CV_3123 from Chromobacterium violaceum (strain ATCC 12472 / DSM 30191 / JCM 1249 / CCUG 213 / NBRC 12614 / NCIMB 9131 / NCTC 9757 / MK).